We begin with the raw amino-acid sequence, 219 residues long: Octanoyltransferase (219 aa).

Residues 34–209 (SESPDELWIV…TFSQLLGYQH (176 aa)) enclose the BPL/LPL catalytic domain. Substrate is bound by residues 73 to 80 (RGGQVTYH), 140 to 142 (SLG), and 153 to 155 (GLA). C171 functions as the Acyl-thioester intermediate in the catalytic mechanism.

This sequence belongs to the LipB family.

It is found in the cytoplasm. It catalyses the reaction octanoyl-[ACP] + L-lysyl-[protein] = N(6)-octanoyl-L-lysyl-[protein] + holo-[ACP] + H(+). It functions in the pathway protein modification; protein lipoylation via endogenous pathway; protein N(6)-(lipoyl)lysine from octanoyl-[acyl-carrier-protein]: step 1/2. Functionally, catalyzes the transfer of endogenously produced octanoic acid from octanoyl-acyl-carrier-protein onto the lipoyl domains of lipoate-dependent enzymes. Lipoyl-ACP can also act as a substrate although octanoyl-ACP is likely to be the physiological substrate. The sequence is that of Octanoyltransferase from Shewanella putrefaciens (strain CN-32 / ATCC BAA-453).